The sequence spans 336 residues: Ketol-acid reductoisomerase (NADP(+)) 1 (336 aa).

One can recognise a KARI N-terminal Rossmann domain in the interval 2–181 (AKVYYEKDVT…GATRAGVLET (180 aa)). Residues 25–28 (YGSQ), Arg48, Ser52, and 82–85 (DELQ) each bind NADP(+). The active site involves His107. NADP(+) is bound at residue Gly133. One can recognise a KARI C-terminal knotted domain in the interval 182–327 (TFKEETETDL…RKLREMMPFV (146 aa)). Residues Asp190, Glu194, Glu226, and Glu230 each contribute to the Mg(2+) site. Ser251 is a binding site for substrate.

The protein belongs to the ketol-acid reductoisomerase family. The cofactor is Mg(2+).

The catalysed reaction is (2R)-2,3-dihydroxy-3-methylbutanoate + NADP(+) = (2S)-2-acetolactate + NADPH + H(+). The enzyme catalyses (2R,3R)-2,3-dihydroxy-3-methylpentanoate + NADP(+) = (S)-2-ethyl-2-hydroxy-3-oxobutanoate + NADPH + H(+). The protein operates within amino-acid biosynthesis; L-isoleucine biosynthesis; L-isoleucine from 2-oxobutanoate: step 2/4. It functions in the pathway amino-acid biosynthesis; L-valine biosynthesis; L-valine from pyruvate: step 2/4. Involved in the biosynthesis of branched-chain amino acids (BCAA). Catalyzes an alkyl-migration followed by a ketol-acid reduction of (S)-2-acetolactate (S2AL) to yield (R)-2,3-dihydroxy-isovalerate. In the isomerase reaction, S2AL is rearranged via a Mg-dependent methyl migration to produce 3-hydroxy-3-methyl-2-ketobutyrate (HMKB). In the reductase reaction, this 2-ketoacid undergoes a metal-dependent reduction by NADPH to yield (R)-2,3-dihydroxy-isovalerate. The sequence is that of Ketol-acid reductoisomerase (NADP(+)) 1 from Bacillus cereus (strain ZK / E33L).